A 195-amino-acid chain; its full sequence is Cysteine/O-acetylserine efflux protein (195 aa).

The Periplasmic portion of the chain corresponds to 1–9 (MTPMLLSAF). A helical membrane pass occupies residues 10 to 32 (WTYTLITALTPGPNNILALSAAT). Over 33-46 (AHGFRQSIRVLAGM) the chain is Cytoplasmic. Residues 47-67 (SLGFLVVMLLCAGIAFSLAVI) form a helical membrane-spanning segment. Residues 68–69 (DP) lie on the Periplasmic side of the membrane. The helical transmembrane segment at 70–90 (AIIHLLSWVGAAYILWLAWKI) threads the bilayer. At 91–104 (ATSPAADENARPKP) the chain is on the cytoplasmic side. A helical transmembrane segment spans residues 105-125 (VGFWVSFGLQFVNVKIILYGI). Residues 126 to 141 (TALSTFVLPQTQALNW) lie on the Periplasmic side of the membrane. The helical transmembrane segment at 142–162 (VIGVSILLALIGTFGNVCWAL) threads the bilayer. Residues 163–176 (AGHLFQRAFRHYGR) are Cytoplasmic-facing. Residues 177 to 194 (QLNIILALLLVYCAVRIF) traverse the membrane as a helical segment. Tyrosine 195 is a topological domain (periplasmic).

This sequence belongs to the Rht family.

It localises to the cell inner membrane. The catalysed reaction is O-acetyl-L-serine(in) = O-acetyl-L-serine(out). It carries out the reaction L-cysteine(in) = L-cysteine(out). Exporter of O-acetylserine (OAS) and cysteine. The chain is Cysteine/O-acetylserine efflux protein (eamB) from Salmonella choleraesuis (strain SC-B67).